A 282-amino-acid polypeptide reads, in one-letter code: MKIITTVQEMQQITNELHASGKSIGFVPTMGYLHEGHATLLRKAREENEIVVLSVFVNPLQFGPNEDLDRYPRDIDRDENVAKENGVDYLFYPSVEEMYPAEQTTTVEVVKRTDVLCGKQRPGHFAGVATVLMKLFNITLPTRAYFGMKDAQQVAVIEGFVTDFNIPVTIVPVDIVREEDGLAKSSRNVYLSLEEREEAPHLYGSLCIAKERIEAGERNPEIIMNLVKEHIEKYTKGTVDYADLYAYPSLKAINKIEGRIILAIAVKFENVRLIDNITLMGK.

Residue 30 to 37 (MGYLHEGH) coordinates ATP. Residue His37 is the Proton donor of the active site. Gln61 lines the (R)-pantoate pocket. Gln61 is a beta-alanine binding site. 147 to 150 (GMKD) is a binding site for ATP. Residue Gln153 coordinates (R)-pantoate. ATP is bound by residues Val176 and 184 to 187 (KSSR).

It belongs to the pantothenate synthetase family. Homodimer.

It is found in the cytoplasm. The catalysed reaction is (R)-pantoate + beta-alanine + ATP = (R)-pantothenate + AMP + diphosphate + H(+). It functions in the pathway cofactor biosynthesis; (R)-pantothenate biosynthesis; (R)-pantothenate from (R)-pantoate and beta-alanine: step 1/1. Its function is as follows. Catalyzes the condensation of pantoate with beta-alanine in an ATP-dependent reaction via a pantoyl-adenylate intermediate. This is Pantothenate synthetase from Bacillus mycoides (strain KBAB4) (Bacillus weihenstephanensis).